Reading from the N-terminus, the 888-residue chain is Leucine--tRNA ligase (888 aa).

Positions 43-53 (PYPSGRIHMGH) match the 'HIGH' region motif. The 'KMSKS' region signature appears at 644–648 (KMSKS). Lysine 647 contributes to the ATP binding site.

It belongs to the class-I aminoacyl-tRNA synthetase family.

It localises to the cytoplasm. The catalysed reaction is tRNA(Leu) + L-leucine + ATP = L-leucyl-tRNA(Leu) + AMP + diphosphate. In Rhodopseudomonas palustris (strain BisA53), this protein is Leucine--tRNA ligase.